A 199-amino-acid chain; its full sequence is Large ribosomal subunit protein uL18 (199 aa).

This sequence belongs to the universal ribosomal protein uL18 family. As to quaternary structure, part of the 50S ribosomal subunit. Contacts the 5S and 23S rRNAs.

Functionally, this is one of the proteins that bind and probably mediate the attachment of the 5S RNA into the large ribosomal subunit, where it forms part of the central protuberance. This Saccharolobus solfataricus (strain ATCC 35092 / DSM 1617 / JCM 11322 / P2) (Sulfolobus solfataricus) protein is Large ribosomal subunit protein uL18.